The primary structure comprises 432 residues: UDP-N-acetylglucosamine 1-carboxyvinyltransferase (432 aa).

Phosphoenolpyruvate is bound at residue 22–23 (KN). Residue R102 coordinates UDP-N-acetyl-alpha-D-glucosamine. C126 (proton donor) is an active-site residue. C126 is modified (2-(S-cysteinyl)pyruvic acid O-phosphothioketal). UDP-N-acetyl-alpha-D-glucosamine is bound by residues 131–135 (RPVDL), D317, and I339.

The protein belongs to the EPSP synthase family. MurA subfamily.

The protein resides in the cytoplasm. The enzyme catalyses phosphoenolpyruvate + UDP-N-acetyl-alpha-D-glucosamine = UDP-N-acetyl-3-O-(1-carboxyvinyl)-alpha-D-glucosamine + phosphate. The protein operates within cell wall biogenesis; peptidoglycan biosynthesis. Its function is as follows. Cell wall formation. Adds enolpyruvyl to UDP-N-acetylglucosamine. The protein is UDP-N-acetylglucosamine 1-carboxyvinyltransferase of Rhodospirillum centenum (strain ATCC 51521 / SW).